The primary structure comprises 355 residues: Trans-3-hydroxy-L-proline dehydratase (355 aa).

Residue Cys-111 is the Proton acceptor of the active site. Substrate contacts are provided by residues 112–113 (GH) and 276–277 (GS).

This sequence belongs to the proline racemase family. In terms of assembly, homodimer.

The enzyme catalyses trans-3-hydroxy-L-proline = 1-pyrroline-2-carboxylate + H2O. Its function is as follows. Catalyzes the dehydration of trans-3-hydroxy-L-proline (t3LHyp) to Delta(1)-pyrroline-2-carboxylate (Pyr2C). Together with LhpI, is involved in a metabolic pathway that converts t3LHyp to L-proline. This is Trans-3-hydroxy-L-proline dehydratase from Colwellia psychrerythraea (strain 34H / ATCC BAA-681) (Vibrio psychroerythus).